The sequence spans 71 residues: Small ribosomal subunit protein bS21 (71 aa).

The protein belongs to the bacterial ribosomal protein bS21 family.

The chain is Small ribosomal subunit protein bS21 from Acinetobacter baylyi (strain ATCC 33305 / BD413 / ADP1).